A 366-amino-acid chain; its full sequence is Sulfite reductase, dissimilatory-type subunit beta (366 aa).

[4Fe-4S] cluster contacts are provided by Cys140, Cys177, Cys178, Cys182, Cys220, Cys241, Cys244, and Cys247. Position 182 (Cys182) interacts with siroheme. In terms of domain architecture, 4Fe-4S ferredoxin-type spans 232–262; that stretch reads KTIKVDVEKCMYCGNCYTMCPGMPLFDPEND.

As to quaternary structure, heterotetramer of two alpha and two beta subunits. [4Fe-4S] cluster serves as cofactor. Siroheme is required as a cofactor.

Its subcellular location is the membrane. It catalyses the reaction [DsrC protein]-trisulfide + NAD(+) + 3 H2O = [DsrC protein]-dithiol + sulfite + NADH + 3 H(+). Catalyzes the reduction of sulfite to sulfide. This is the terminal oxidation reaction in sulfate respiration. The polypeptide is Sulfite reductase, dissimilatory-type subunit beta (dsrB) (Archaeoglobus fulgidus (strain ATCC 49558 / DSM 4304 / JCM 9628 / NBRC 100126 / VC-16)).